The chain runs to 589 residues: BTB/POZ domain and ankyrin repeat-containing protein NPR3 (589 aa).

The tract at residues 1–25 (METSTISFSSSSPPSPPPPQPAPGD) is disordered. Residues 13–22 (PPSPPPPQPA) show a composition bias toward pro residues. A BTB domain is found at 52–137 (AEIVLASGGG…LYTGRLRSAP (86 aa)). The C2HC NPR-type zinc finger occupies 140-154 (AAACLDDGCSHDACR). The Zn(2+) site is built by Cys-143, Cys-148, His-150, and Cys-153. 3 ANK repeats span residues 260 to 290 (KRVRNIHKALDSDDVDLVGMLLKESPVTLDD), 292 to 319 (FAIHYAAAYCEPKVLAELLKLESANVNL), and 323 to 352 (SGYTPLHMACMRREPDIIVSLIEKGASVLE). The salicylic acid-binding core (SBC) stretch occupies residues 382-521 (ERSKAYLCIG…LDKFLNEEST (140 aa)). Arg-433 lines the salicylate pocket. The segment at 555 to 589 (DKAAGAAISSSTSASSSPRYETKLRPGNKKGKLSR) is disordered. A compositionally biased stretch (low complexity) spans 558–571 (AGAAISSSTSASSS). The span at 580-589 (PGNKKGKLSR) shows a compositional bias: basic residues.

The protein belongs to the plant 'ANKYRIN-BTB/POZ' family. 'NPR1-like' subfamily. As to quaternary structure, interacts with TGA2.1, TGA2.2, TGA2.3, LG2, TGAL1, TGAL4, NRR, RH1, RH2 and RH3.

The protein localises to the nucleus. Its pathway is protein modification; protein ubiquitination. In terms of biological role, salicylic acid (SA)-binding substrate-specific adapter of an E3 ubiquitin-protein ligase complex (CUL3-RBX1-BTB) which mediates the ubiquitination and subsequent proteasomal degradation of target proteins. Involved in defense response against the bacterial blight disease caused by Xanthomonas oryzae pv. oryzae (Xoo). Plants expressing an NPR3/NH3 transgene driven by its native promoter show enhanced resistance to the Xoo pathogen, and exhibit elevated sensitivity to benzothiadiazole (BTH) treatment and enhanced induction of defense-related genes upon treatment with BTH. Intriguingly, constitutive over-expression of NPR3/NH3 with a ubiquitin promoter does not confer disease resistance to Xoo. This chain is BTB/POZ domain and ankyrin repeat-containing protein NPR3, found in Oryza sativa subsp. japonica (Rice).